A 625-amino-acid polypeptide reads, in one-letter code: Autophagy-related protein 20 (625 aa).

Positions 1–59 are disordered; it reads MNPNDNNLFGDIEQDNNPSFYGNQSFLRDPYGKSKQTCPPSVTSNGDPSITNDDNNSAH. Composition is skewed to polar residues over residues 15–26 and 34–59; these read DNNPSFYGNQSF and SKQT…NSAH. One can recognise a PX domain in the interval 79-202; the sequence is NDPNLQINVI…HKFLDPNYEL (124 aa). Positions 118, 120, 144, and 167 each coordinate a 1,2-diacyl-sn-glycero-3-phospho-(1D-myo-inositol-3-phosphate).

The protein belongs to the sorting nexin family.

It localises to the endosome membrane. It is found in the preautophagosomal structure membrane. Required for cytoplasm to vacuole transport (Cvt), pexophagy and mitophagy. Also involved in endoplasmic reticulum-specific autophagic process and is essential for the survival of cells subjected to severe ER stress. Functions in protein retrieval from the endocytic pathway. The chain is Autophagy-related protein 20 (ATG20) from Debaryomyces hansenii (strain ATCC 36239 / CBS 767 / BCRC 21394 / JCM 1990 / NBRC 0083 / IGC 2968) (Yeast).